The primary structure comprises 350 residues: Hydroxymethylglutaryl-CoA synthase (350 aa).

Residue aspartate 30 coordinates (3S)-3-hydroxy-3-methylglutaryl-CoA. The active-site Proton donor/acceptor is glutamate 82. (3S)-3-hydroxy-3-methylglutaryl-CoA is bound by residues cysteine 114, serine 155, threonine 203, and histidine 236. Cysteine 114 acts as the Acyl-thioester intermediate in catalysis. Histidine 236 acts as the Proton donor/acceptor in catalysis. Position 241 (arginine 241) interacts with CoA. (3S)-3-hydroxy-3-methylglutaryl-CoA is bound by residues arginine 245, asparagine 268, and serine 298.

The protein belongs to the thiolase-like superfamily. Archaeal HMG-CoA synthase family. In terms of assembly, interacts with acetoacetyl-CoA thiolase that catalyzes the precedent step in the pathway and with a DUF35 protein. The acetoacetyl-CoA thiolase/HMG-CoA synthase complex channels the intermediate via a fused CoA-binding site, which allows for efficient coupling of the endergonic thiolase reaction with the exergonic HMGCS reaction.

The catalysed reaction is acetoacetyl-CoA + acetyl-CoA + H2O = (3S)-3-hydroxy-3-methylglutaryl-CoA + CoA + H(+). The protein operates within metabolic intermediate biosynthesis; (R)-mevalonate biosynthesis; (R)-mevalonate from acetyl-CoA: step 2/3. Catalyzes the condensation of acetyl-CoA with acetoacetyl-CoA to form 3-hydroxy-3-methylglutaryl-CoA (HMG-CoA). Functions in the mevalonate (MVA) pathway leading to isopentenyl diphosphate (IPP), a key precursor for the biosynthesis of isoprenoid compounds that are building blocks of archaeal membrane lipids. This is Hydroxymethylglutaryl-CoA synthase from Pyrobaculum aerophilum (strain ATCC 51768 / DSM 7523 / JCM 9630 / CIP 104966 / NBRC 100827 / IM2).